The primary structure comprises 205 residues: Peroxynitrite isomerase (205 aa).

Residues 1–23 are disordered; sequence MTEPDPAAAEQRPSVGRNLPTFQ. Positions 52 to 58 match the GXWXGXG motif; sequence GVWRGEG. 3 residues coordinate heme b: Thr63, Lys168, and His195.

This sequence belongs to the nitrobindin family. In terms of assembly, homodimer. The cofactor is heme b.

The enzyme catalyses peroxynitrite = nitrate. Its pathway is nitrogen metabolism. Functionally, heme-binding protein able to scavenge peroxynitrite and to protect free L-tyrosine against peroxynitrite-mediated nitration, by acting as a peroxynitrite isomerase that converts peroxynitrite to nitrate. Therefore, this protein likely plays a role in peroxynitrite sensing and in the detoxification of reactive nitrogen and oxygen species (RNS and ROS, respectively). Is able to bind nitric oxide (NO) in vitro, but may act as a sensor of peroxynitrite levels in vivo. This Mycobacteroides abscessus (strain ATCC 19977 / DSM 44196 / CCUG 20993 / CIP 104536 / JCM 13569 / NCTC 13031 / TMC 1543 / L948) (Mycobacterium abscessus) protein is Peroxynitrite isomerase.